We begin with the raw amino-acid sequence, 151 residues long: Ribosome maturation factor RimP (151 aa).

Belongs to the RimP family.

Its subcellular location is the cytoplasm. Functionally, required for maturation of 30S ribosomal subunits. This Shewanella halifaxensis (strain HAW-EB4) protein is Ribosome maturation factor RimP.